The following is a 618-amino-acid chain: UvrABC system protein C (618 aa).

In terms of domain architecture, GIY-YIG spans 19–97; it reads SEPGIYRMLD…IKALRPKYNV (79 aa). In terms of domain architecture, UVR spans 208–243; sequence QIILDALAERMKQAVNQLNFEEAAVLRDQIKNLRLI.

This sequence belongs to the UvrC family. In terms of assembly, interacts with UvrB in an incision complex.

The protein localises to the cytoplasm. Functionally, the UvrABC repair system catalyzes the recognition and processing of DNA lesions. UvrC both incises the 5' and 3' sides of the lesion. The N-terminal half is responsible for the 3' incision and the C-terminal half is responsible for the 5' incision. The protein is UvrABC system protein C of Legionella pneumophila (strain Paris).